The primary structure comprises 1379 residues: DNA-directed RNA polymerase subunit beta'' (1379 aa).

Zn(2+) is bound by residues Cys220, Cys293, Cys300, and Cys303.

It belongs to the RNA polymerase beta' chain family. RpoC2 subfamily. In terms of assembly, in plastids the minimal PEP RNA polymerase catalytic core is composed of four subunits: alpha, beta, beta', and beta''. When a (nuclear-encoded) sigma factor is associated with the core the holoenzyme is formed, which can initiate transcription. The cofactor is Zn(2+).

Its subcellular location is the plastid. The protein resides in the chloroplast. It catalyses the reaction RNA(n) + a ribonucleoside 5'-triphosphate = RNA(n+1) + diphosphate. Its function is as follows. DNA-dependent RNA polymerase catalyzes the transcription of DNA into RNA using the four ribonucleoside triphosphates as substrates. The chain is DNA-directed RNA polymerase subunit beta'' from Nasturtium officinale (Watercress).